Reading from the N-terminus, the 428-residue chain is Serine--tRNA ligase (428 aa).

An L-serine-binding site is contributed by 231 to 233 (TAE). 262 to 264 (RAE) contributes to the ATP binding site. Glu-285 provides a ligand contact to L-serine. Residue 349 to 352 (EISS) coordinates ATP. Ser-385 is a binding site for L-serine.

This sequence belongs to the class-II aminoacyl-tRNA synthetase family. Type-1 seryl-tRNA synthetase subfamily. Homodimer. The tRNA molecule binds across the dimer.

It localises to the cytoplasm. It catalyses the reaction tRNA(Ser) + L-serine + ATP = L-seryl-tRNA(Ser) + AMP + diphosphate + H(+). It carries out the reaction tRNA(Sec) + L-serine + ATP = L-seryl-tRNA(Sec) + AMP + diphosphate + H(+). It functions in the pathway aminoacyl-tRNA biosynthesis; selenocysteinyl-tRNA(Sec) biosynthesis; L-seryl-tRNA(Sec) from L-serine and tRNA(Sec): step 1/1. Functionally, catalyzes the attachment of serine to tRNA(Ser). Is also able to aminoacylate tRNA(Sec) with serine, to form the misacylated tRNA L-seryl-tRNA(Sec), which will be further converted into selenocysteinyl-tRNA(Sec). This is Serine--tRNA ligase from Methylorubrum populi (strain ATCC BAA-705 / NCIMB 13946 / BJ001) (Methylobacterium populi).